The chain runs to 70 residues: ATP synthase subunit c (70 aa).

2 consecutive transmembrane segments (helical) span residues 4 to 24 and 45 to 65; these read IAAA…NGLI and LMFI…VIAF.

This sequence belongs to the ATPase C chain family. F-type ATPases have 2 components, F(1) - the catalytic core - and F(0) - the membrane proton channel. F(1) has five subunits: alpha(3), beta(3), gamma(1), delta(1), epsilon(1). F(0) has three main subunits: a(1), b(2) and c(10-14). The alpha and beta chains form an alternating ring which encloses part of the gamma chain. F(1) is attached to F(0) by a central stalk formed by the gamma and epsilon chains, while a peripheral stalk is formed by the delta and b chains.

The protein localises to the cell membrane. Its function is as follows. F(1)F(0) ATP synthase produces ATP from ADP in the presence of a proton or sodium gradient. F-type ATPases consist of two structural domains, F(1) containing the extramembraneous catalytic core and F(0) containing the membrane proton channel, linked together by a central stalk and a peripheral stalk. During catalysis, ATP synthesis in the catalytic domain of F(1) is coupled via a rotary mechanism of the central stalk subunits to proton translocation. In terms of biological role, key component of the F(0) channel; it plays a direct role in translocation across the membrane. A homomeric c-ring of between 10-14 subunits forms the central stalk rotor element with the F(1) delta and epsilon subunits. The polypeptide is ATP synthase subunit c (Bacillus licheniformis (strain ATCC 14580 / DSM 13 / JCM 2505 / CCUG 7422 / NBRC 12200 / NCIMB 9375 / NCTC 10341 / NRRL NRS-1264 / Gibson 46)).